The following is a 265-amino-acid chain: Apolipoprotein A-I (265 aa).

The N-terminal stretch at 1-18 (MKAVVLTLAVLFLTGSQA) is a signal peptide. Tandem repeats lie at residues 67–88 (LKLV…EHLG) and 89–110 (PVAQ…REIN). The tract at residues 67-265 (LKLVDNWDTL…IDEAAKKLTA (199 aa)) is 10 X approximate tandem repeats. One copy of the 3; half-length repeat lies at 111–121 (KDLEDVRQKTQ). 5 tandem repeats follow at residues 122-143 (PFLD…QKVE), 144-165 (PLSA…EQVT), 166-187 (PLGE…TQLA), 188-209 (PYSE…EGGS), and 210-231 (ASLA…EKAK). At M193 the chain carries Methionine sulfoxide. One copy of the 9; half-length repeat lies at 232–242 (PVLEDIHQGLM). M242 and M244 each carry methionine sulfoxide. Repeat 10 spans residues 243–265 (PMWESFKTGVLNVIDEAAKKLTA).

It belongs to the apolipoprotein A1/A4/E family. Homodimer. Interacts with APOA1BP and CLU. Component of a sperm activating protein complex (SPAP), consisting of APOA1, an immunoglobulin heavy chain, an immunoglobulin light chain and albumin. Interacts with NDRG1. Interacts with SCGB3A2. Interacts with NAXE and YJEFN3. Glycosylated. Post-translationally, palmitoylated. In terms of processing, phosphorylation sites are present in the extracellular medium. As to expression, major protein of plasma HDL, also found in chylomicrons.

It localises to the secreted. In terms of biological role, participates in the reverse transport of cholesterol from tissues to the liver for excretion by promoting cholesterol efflux from tissues and by acting as a cofactor for the lecithin cholesterol acyltransferase (LCAT). As part of the SPAP complex, activates spermatozoa motility. The chain is Apolipoprotein A-I (APOA1) from Tupaia belangeri (Common tree shrew).